Consider the following 312-residue polypeptide: Ribosomal RNA small subunit methyltransferase H (312 aa).

S-adenosyl-L-methionine-binding positions include 36-38 (GGH), Asp-55, Phe-81, Asp-103, and Gln-110.

The protein belongs to the methyltransferase superfamily. RsmH family.

It localises to the cytoplasm. The catalysed reaction is cytidine(1402) in 16S rRNA + S-adenosyl-L-methionine = N(4)-methylcytidine(1402) in 16S rRNA + S-adenosyl-L-homocysteine + H(+). Specifically methylates the N4 position of cytidine in position 1402 (C1402) of 16S rRNA. The protein is Ribosomal RNA small subunit methyltransferase H of Marinomonas sp. (strain MWYL1).